Here is a 157-residue protein sequence, read N- to C-terminus: Transcription elongation factor GreA (157 aa).

Positions 10–76 (THEGKQKLEQ…TLENMIRNAK (67 aa)) form a coiled coil.

The protein belongs to the GreA/GreB family.

Its function is as follows. Necessary for efficient RNA polymerase transcription elongation past template-encoded arresting sites. The arresting sites in DNA have the property of trapping a certain fraction of elongating RNA polymerases that pass through, resulting in locked ternary complexes. Cleavage of the nascent transcript by cleavage factors such as GreA or GreB allows the resumption of elongation from the new 3'terminus. GreA releases sequences of 2 to 3 nucleotides. This chain is Transcription elongation factor GreA, found in Bacillus velezensis (strain DSM 23117 / BGSC 10A6 / LMG 26770 / FZB42) (Bacillus amyloliquefaciens subsp. plantarum).